Consider the following 339-residue polypeptide: Pre-mRNA-splicing factor syf2 (339 aa).

Positions 1 to 136 (MPPEKKRKTE…LQSDPSQLTA (136 aa)) are disordered. Basic and acidic residues predominate over residues 7-16 (RKTEPEDKAE). The span at 17-37 (VTQQENDVAESTTEPNNQTVT) shows a compositional bias: polar residues. Low complexity predominate over residues 45–93 (VTEAALATTSSSSPPVLSASETAQPDTAATSQSSSTPPTSTSAAESAAA). Positions 94–103 (KARERAERFR) are enriched in basic and acidic residues. Residues 126–135 (RLQSDPSQLT) are compositionally biased toward polar residues.

This sequence belongs to the SYF2 family. Associated with the spliceosome.

It is found in the nucleus. Involved in pre-mRNA splicing. The chain is Pre-mRNA-splicing factor syf2 (msp-4) from Neurospora crassa (strain ATCC 24698 / 74-OR23-1A / CBS 708.71 / DSM 1257 / FGSC 987).